The primary structure comprises 67 residues: Large ribosomal subunit protein bL35 (67 aa).

The interval 1–20 (MPKLKTKSGAKKRFVPKKSG) is disordered.

Belongs to the bacterial ribosomal protein bL35 family.

This Anaeromyxobacter dehalogenans (strain 2CP-C) protein is Large ribosomal subunit protein bL35.